Here is a 115-residue protein sequence, read N- to C-terminus: Non-specific lipid-transfer protein 4.2 (115 aa).

The N-terminal stretch at 1 to 25 is a signal peptide; the sequence is MARAAATQLVLVAMVAAMLIVATDA. 4 disulfide bridges follow: C29–C77, C39–C54, C55–C97, and C75–C111.

Belongs to the plant LTP family.

In terms of biological role, plant non-specific lipid-transfer proteins transfer phospholipids as well as galactolipids across membranes. May play a role in wax or cutin deposition in the cell walls of expanding epidermal cells and certain secretory tissues. In Hordeum vulgare (Barley), this protein is Non-specific lipid-transfer protein 4.2 (LTP4.2).